A 210-amino-acid chain; its full sequence is Glutathione S-transferase 3 (210 aa).

One can recognise a GST N-terminal domain in the interval 1–80; that stretch reads MDFYYLPLSA…YLVEKYGKQN (80 aa). Glutathione contacts are provided by residues S9, 50–52, and 64–66; these read HTI and ESR. Positions 87-208 constitute a GST C-terminal domain; sequence CPKKRALINQ…AGCLEMKKYF (122 aa).

It belongs to the GST superfamily. Theta family. As to quaternary structure, homodimer.

It catalyses the reaction RX + glutathione = an S-substituted glutathione + a halide anion + H(+). Conjugation of reduced glutathione to a wide number of exogenous and endogenous hydrophobic electrophiles. In Musca domestica (House fly), this protein is Glutathione S-transferase 3 (Gst3).